The chain runs to 342 residues: 4-hydroxy-2-oxovalerate aldolase (342 aa).

Residues 8 to 260 (ITVHDMTLRD…ATGVDLFKMQ (253 aa)) form the Pyruvate carboxyltransferase domain. 16 to 17 (RD) contributes to the substrate binding site. Aspartate 17 serves as a coordination point for Mn(2+). The active-site Proton acceptor is the histidine 20. Positions 170 and 199 each coordinate substrate. The Mn(2+) site is built by histidine 199 and histidine 201. Residue tyrosine 290 coordinates substrate.

Belongs to the 4-hydroxy-2-oxovalerate aldolase family.

It carries out the reaction (S)-4-hydroxy-2-oxopentanoate = acetaldehyde + pyruvate. This is 4-hydroxy-2-oxovalerate aldolase from Albidiferax ferrireducens (strain ATCC BAA-621 / DSM 15236 / T118) (Rhodoferax ferrireducens).